An 892-amino-acid chain; its full sequence is MEKVKLTKNLKLKIKNAQLTKAAGLDKLKQKLAQAGSSDTKNSPASKAQTKEKSSKKTAGTPAPAPEVDSGATESTARRIRAKDRSSFAAEPTVTTALPGDASHLTLDAIPAMKAPEITSVTQKEQTLGECTDTSSVQQEEKKESSEETSPERVEETLIIRTRTEPKSVVSIKPKFGPTGKHINHLLAKTFKAPAKETKAASTEETTQQQPRQNDAASYNNKQQPSGTSSRPASSAPSYRRESTNNNNNAKRGSERDRSKRSDESVKAFTGRDRYGLNEGSSEEDKWRKKRVHKTKKQAEEHVVQCPAHIKIALPITVKDLAAEMKLKASELIQKLFIHGMTYVVNDVLDSQTVVEYIGLEFGCTIEIDSSAKEKLCLLENAVRDEVNATDPEKLIIRSPIVAFMGHVDHGKTTIIDALRQSNMAASEAGAITQHTGAFKCTTPVGEITVLDTPGHEAFSAMRARGAEVCDIVVLVVAGDEGIKEQTIEAIEHAKGANITIVVAINKCDKPNFNVETVYRQLAELDLLPEAWGGSIATINTSAKTGEGLQDLLEMLALQAEVLELKADPSARARGLVIESELHKGLGAVATVLVQNGTLHLGEALVFNDCYGKVKTMHDEHNQLLQSATPSTPVLITGLSAIPKAGDPFIVVKNEKVAKEIISARLAGQQRSAALQKKRPNFDAVLQNKKTLKLIIKADVQGSIEALAHSILNIRSEKVDVEILSSEVGDISESDIRLASASKATVIGFHTSVESHAEPLIKNLNVKVCLFDIIYHAVDAIKEIMTGLLDPIAEEKNLGAAEIKATFKSSQLGTIYGCLVTEGTIVRNQKIRIIRDKEVLWKGSLSSLKRLKEDVKEVKKGMECGILLDNYQQAQVGDILQCYEVIYHPQKL.

2 disordered regions span residues 32–102 and 114–300; these read LAQA…PGDA and KAPE…KQAE. Over residues 35 to 48 the composition is skewed to polar residues; it reads AGSSDTKNSPASKA. The span at 139–166 shows a compositional bias: basic and acidic residues; the sequence is QEEKKESSEETSPERVEETLIIRTRTEP. A compositionally biased stretch (low complexity) spans 200–211; the sequence is AASTEETTQQQP. A compositionally biased stretch (polar residues) spans 212–224; it reads RQNDAASYNNKQQ. Positions 225–238 are enriched in low complexity; that stretch reads PSGTSSRPASSAPS. Positions 252 to 276 are enriched in basic and acidic residues; it reads RGSERDRSKRSDESVKAFTGRDRYG. In terms of domain architecture, tr-type G spans 397 to 566; that stretch reads IRSPIVAFMG…ALQAEVLELK (170 aa). Residues 406–413 are G1; the sequence is GHVDHGKT. A GTP-binding site is contributed by 406–413; sequence GHVDHGKT. Positions 431-435 are G2; it reads AITQH. The tract at residues 452 to 455 is G3; sequence DTPG. Residues 452–456 and 506–509 contribute to the GTP site; these read DTPGH and NKCD. Residues 506–509 form a G4 region; it reads NKCD. Residues 542–544 form a G5 region; that stretch reads SAK.

Belongs to the TRAFAC class translation factor GTPase superfamily. Classic translation factor GTPase family. IF-2 subfamily.

Its subcellular location is the cytoplasm. In terms of biological role, one of the essential components for the initiation of protein synthesis. Protects formylmethionyl-tRNA from spontaneous hydrolysis and promotes its binding to the 30S ribosomal subunits. Also involved in the hydrolysis of GTP during the formation of the 70S ribosomal complex. The protein is Translation initiation factor IF-2 of Chlamydia trachomatis serovar A (strain ATCC VR-571B / DSM 19440 / HAR-13).